The chain runs to 158 residues: Cyclic pyranopterin monophosphate synthase (158 aa).

Residues 76–78 (LCH) and 114–115 (ME) contribute to the substrate site. Residue D129 is part of the active site.

It belongs to the MoaC family. Homohexamer; trimer of dimers.

The catalysed reaction is (8S)-3',8-cyclo-7,8-dihydroguanosine 5'-triphosphate = cyclic pyranopterin phosphate + diphosphate. Its pathway is cofactor biosynthesis; molybdopterin biosynthesis. Catalyzes the conversion of (8S)-3',8-cyclo-7,8-dihydroguanosine 5'-triphosphate to cyclic pyranopterin monophosphate (cPMP). This is Cyclic pyranopterin monophosphate synthase from Shewanella halifaxensis (strain HAW-EB4).